The sequence spans 272 residues: Aquaporin FA-CHIP (272 aa).

Topologically, residues 1–17 are cytoplasmic; sequence MASEFKKKAFWRAVIAE. A helical membrane pass occupies residues 18–35; that stretch reads FLAMILFVFISIGAALGF. Topologically, residues 36 to 52 are extracellular; sequence NFPIEEKANQTVGRSQD. The N-linked (GlcNAc...) asparagine glycan is linked to N44. Residues 53–71 form a helical membrane-spanning segment; it reads IVKVSLAFGISIATMAQSV. The Cytoplasmic segment spans residues 72 to 97; the sequence is GHVSGAHLNPAVTLGCLLSCQISILK. Residues 80–82 carry the NPA 1 motif; sequence NPA. Residues 98-119 traverse the membrane as a helical segment; the sequence is AVMYIIAQCLGAVVATAILSGI. At 120–139 the chain is on the extracellular side; that stretch reads TSGLENNSLGLNGLSPGVSA. The N-linked (GlcNAc...) asparagine glycan is linked to N125. A helical membrane pass occupies residues 140-160; the sequence is GQGLGVEILVTFQLVLCVVAV. The Cytoplasmic segment spans residues 161 to 168; the sequence is TDRRRHDV. Residues 169–188 traverse the membrane as a helical segment; sequence SGSVPLAIGLSVALGHLIAI. Over 189-214 the chain is Extracellular; sequence DYTGCGMNPARSFGSAVLTKNFTYHW. Residues 196-198 carry the NPA 2 motif; it reads NPA. N-linked (GlcNAc...) asparagine glycosylation occurs at N209. The chain crosses the membrane as a helical span at residues 215–236; that stretch reads IFWVGPMIGGAAAAIIYDFILA. Over 237-272 the chain is Cytoplasmic; sequence PRTSDLTDRMKVWTNGQVEEYELDGDDNTRVEMKPK.

This sequence belongs to the MIP/aquaporin (TC 1.A.8) family.

The protein localises to the membrane. Its function is as follows. Forms a water-specific channel. The polypeptide is Aquaporin FA-CHIP (AQPA) (Pelophylax lessonae (Pool frog)).